The sequence spans 461 residues: Argininosuccinate lyase (461 aa).

It belongs to the lyase 1 family. Argininosuccinate lyase subfamily.

It is found in the cytoplasm. It catalyses the reaction 2-(N(omega)-L-arginino)succinate = fumarate + L-arginine. The protein operates within amino-acid biosynthesis; L-arginine biosynthesis; L-arginine from L-ornithine and carbamoyl phosphate: step 3/3. This chain is Argininosuccinate lyase, found in Streptococcus thermophilus (strain CNRZ 1066).